We begin with the raw amino-acid sequence, 171 residues long: Photosystem I assembly protein Ycf3 (171 aa).

TPR repeat units follow at residues 35–68, 72–105, and 120–153; these read AFTYYRDGMSAQAEGEYAEALQNYYEAMRLEVDA, SYILYNIGLIHTSNGEHAKALEYYYQALERNPYL, and GEQAIESGNSRISNLLFDKAADYWKEAIRLAPTN.

Belongs to the Ycf3 family.

Its subcellular location is the plastid. The protein localises to the chloroplast thylakoid membrane. Its function is as follows. Essential for the assembly of the photosystem I (PSI) complex. May act as a chaperone-like factor to guide the assembly of the PSI subunits. This is Photosystem I assembly protein Ycf3 from Nephroselmis olivacea (Green alga).